A 207-amino-acid polypeptide reads, in one-letter code: Killer cell lectin-like receptor subfamily F member 2 (207 aa).

At 1 to 30 (MENEDGYMTLSFKNRCKSKQKSKDFSLYPQ) the chain is on the cytoplasmic side. Tyr7 carries the phosphotyrosine modification. A helical; Signal-anchor for type II membrane protein membrane pass occupies residues 31 to 51 (YYCLLLIFGCIVILIFIMTGI). The Extracellular segment spans residues 52–207 (DLKFWHKKMD…ILTHNGTSGV (156 aa)). An N-linked (GlcNAc...) asparagine glycan is attached at Asn67. Cystine bridges form between Cys78–Cys89, Cys106–Cys193, and Cys172–Cys185. The 110-residue stretch at 85 to 194 (NEGKCYWFST…CSSTFKGICQ (110 aa)) folds into the C-type lectin domain. A glycan (N-linked (GlcNAc...) asparagine) is linked at Asn202.

As to quaternary structure, homodimer; non-disulfide-linked. Interacts with CLEC2A. Post-translationally, N-glycosylated.

It is found in the cell membrane. In terms of biological role, C-type lectin-like receptor involved in natural killer cell mediated cytotoxicity and cytokine secretion in keratinocytes via its interaction with CLEC2A. Triggers degranulation in a SYK-dependent manner and stimulates SYK phosphotyrosinylation without recruiting SYK directly. The polypeptide is Killer cell lectin-like receptor subfamily F member 2 (KLRF2) (Homo sapiens (Human)).